We begin with the raw amino-acid sequence, 175 residues long: Glutamyl-tRNA(Gln) amidotransferase subunit F, mitochondrial (175 aa).

A mitochondrion-targeting transit peptide spans 1-19 (MLKVSARHAPVLRLPRRFY).

The protein belongs to the GatF family. As to quaternary structure, subunit of the heterotrimeric GatFAB amidotransferase (AdT) complex, composed of A, B and F subunits.

The protein resides in the mitochondrion inner membrane. It carries out the reaction L-glutamyl-tRNA(Gln) + L-glutamine + ATP + H2O = L-glutaminyl-tRNA(Gln) + L-glutamate + ADP + phosphate + H(+). Functionally, allows the formation of correctly charged Gln-tRNA(Gln) through the transamidation of misacylated Glu-tRNA(Gln) in the mitochondria. The reaction takes place in the presence of glutamine and ATP through an activated gamma-phospho-Glu-tRNA(Gln). Required for proper protein synthesis within the mitochondrion. This is Glutamyl-tRNA(Gln) amidotransferase subunit F, mitochondrial from Lachancea thermotolerans (strain ATCC 56472 / CBS 6340 / NRRL Y-8284) (Yeast).